The following is a 302-amino-acid chain: tRNA dimethylallyltransferase 2 (302 aa).

Position 6–13 (6–13 (GPTACGKT)) interacts with ATP. 8 to 13 (TACGKT) contributes to the substrate binding site. Interaction with substrate tRNA regions lie at residues 31-34 (DSRQ) and 154-158 (QRAIR).

This sequence belongs to the IPP transferase family. In terms of assembly, monomer. Mg(2+) is required as a cofactor.

It catalyses the reaction adenosine(37) in tRNA + dimethylallyl diphosphate = N(6)-dimethylallyladenosine(37) in tRNA + diphosphate. Functionally, catalyzes the transfer of a dimethylallyl group onto the adenine at position 37 in tRNAs that read codons beginning with uridine, leading to the formation of N6-(dimethylallyl)adenosine (i(6)A). In Porphyromonas gingivalis (strain ATCC BAA-308 / W83), this protein is tRNA dimethylallyltransferase 2.